A 164-amino-acid chain; its full sequence is R-phycoerythrin alpha chain (164 aa).

Cysteine 82 and cysteine 139 together coordinate (2R,3E)-phycoerythrobilin.

It belongs to the phycobiliprotein family. As to quaternary structure, heterodimer of an alpha and a beta chain. In terms of processing, contains two covalently linked bilin chromophores.

It localises to the plastid. The protein localises to the chloroplast thylakoid membrane. Light-harvesting photosynthetic bile pigment-protein from the phycobiliprotein complex. In Porphyra purpurea (Red seaweed), this protein is R-phycoerythrin alpha chain (cpeA).